A 338-amino-acid chain; its full sequence is tRNA N6-adenosine threonylcarbamoyltransferase (338 aa).

Fe cation-binding residues include His109 and His113. Residues 132–136 (AISGA), Asp165, Gly178, and Asn277 each bind substrate. Asp302 lines the Fe cation pocket.

It belongs to the KAE1 / TsaD family. Fe(2+) is required as a cofactor.

Its subcellular location is the cytoplasm. The catalysed reaction is L-threonylcarbamoyladenylate + adenosine(37) in tRNA = N(6)-L-threonylcarbamoyladenosine(37) in tRNA + AMP + H(+). Its function is as follows. Required for the formation of a threonylcarbamoyl group on adenosine at position 37 (t(6)A37) in tRNAs that read codons beginning with adenine. Is involved in the transfer of the threonylcarbamoyl moiety of threonylcarbamoyl-AMP (TC-AMP) to the N6 group of A37, together with TsaE and TsaB. TsaD likely plays a direct catalytic role in this reaction. The chain is tRNA N6-adenosine threonylcarbamoyltransferase from Chlamydia trachomatis serovar L2b (strain UCH-1/proctitis).